Here is a 279-residue protein sequence, read N- to C-terminus: Proline-rich protein 23D1 (279 aa).

Disordered stretches follow at residues 1–60 (MYGY…PHLN) and 247–270 (LRPM…RPPS). Residues 15–33 (TEPQNDNEGETSLATTQMN) show a composition bias toward polar residues.

Belongs to the PRR23 family.

This Homo sapiens (Human) protein is Proline-rich protein 23D1 (PRR23D1).